The sequence spans 301 residues: GTP cyclohydrolase FolE2 (301 aa).

It belongs to the GTP cyclohydrolase IV family.

The enzyme catalyses GTP + H2O = 7,8-dihydroneopterin 3'-triphosphate + formate + H(+). It functions in the pathway cofactor biosynthesis; 7,8-dihydroneopterin triphosphate biosynthesis; 7,8-dihydroneopterin triphosphate from GTP: step 1/1. Functionally, converts GTP to 7,8-dihydroneopterin triphosphate. This Pseudomonas putida (strain GB-1) protein is GTP cyclohydrolase FolE2.